Reading from the N-terminus, the 71-residue chain is 26S proteasome complex subunit rpn15 (71 aa).

A disordered region spans residues Met-1–Asp-38. Residues Asn-11–Ala-22 are compositionally biased toward acidic residues. The segment at Asp-16–Asn-25 is UBS-II. Residues Asp-38–Asp-49 form a UBS-I region.

It belongs to the DSS1/SEM1 family. Interacts with mlo3, rae1, nup98/nup189 and nup146. Interacts with rad24. Interacts (via UBSs) with ubiquitin (ubi3/ubi5).

The protein resides in the cytoplasm. It is found in the nucleus. In terms of biological role, versatile protein that might stabilize multiple protein complexes involved in diverse pathways. Subunit of the 26S proteasome which plays a role in ubiquitin-dependent proteolysis. Acts as a ubiquitin receptor of the 26S proteasome, by interacting with ubiquitin chains linked by 'Lys-63' and 'Lys-48'. Involved in nuclear export of specific sets of mRNAs. Links the mRNA adapter mlo3 to rae1 for targeting mRNA-protein complex to the proteins of the nucleoporin complex (NPC). Involved in recombinational repair of DNA. Plays a critical role in linking repair and checkpoint factors to damaged DNA sites by specifically recruiting rad24 and cdc25 to the DSBs. This Schizosaccharomyces pombe (strain 972 / ATCC 24843) (Fission yeast) protein is 26S proteasome complex subunit rpn15 (rpn15).